Consider the following 501-residue polypeptide: TNF receptor-associated factor 2 (501 aa).

Ala2 is modified (N-acetylalanine). Residue Ser5 is modified to Phosphoserine. Thr7 carries the post-translational modification Phosphothreonine. Ser11 bears the Phosphoserine mark. Thr22 carries the phosphothreonine modification. A Glycyl lysine isopeptide (Lys-Gly) (interchain with G-Cter in ubiquitin) cross-link involves residue Lys31. The RING-type zinc finger occupies 34–73 (CSACKNILRRPFQAQCGHRYCSFCLTSILSSGPQNCAACV). Thr117 is modified (phosphothreonine; by PKC). 2 consecutive TRAF-type zinc fingers follow at residues 124–180 (CHEG…VHYE) and 177–233 (VHYE…ENLQ). The tract at residues 283–293 (ENIVCVLNREV) is important for interaction with BIRC2 and BIRC3. Positions 298-348 (VTAEACSRQHRLDQDKIEALSNKVQQLERSIGLKDLAMADLEQKVSELEVS) form a coiled coil. A Glycyl lysine isopeptide (Lys-Gly) (interchain with G-Cter in ubiquitin) cross-link involves residue Lys320. One can recognise an MATH domain in the interval 351-496 (DGVFIWKISD…DDAIFIKAIV (146 aa)).

Belongs to the TNF receptor-associated factor family. A subfamily. Homotrimer. Heterotrimer with TRAF1. Heterotrimer with TRAF3 (via TRAF domain). The domain containing the RING-type and the first TRAF-type zinc finger can also form homodimers (in vitro). Interacts with TNFRSF1B/TNFR2. Interacts with TNFRSF5/CD40. Interacts with TNFRSF4, TNFRSF7/CD27, TNFRSF8/CD30, TNFRSF9/CD137, TNFRSF11A/RANK, TNFRSF13B/TACI, TNFRSF14, TNFRSF16/NGFR, TNFRSF17/BCMA, TNFRSF18/AITR, TNFRSF19/TROY, TNFRSF19L/RELT and EDAR. Stimulation of TNF-alpha receptor TNFRSF1A leads to the formation of two distinct signaling complexes. Plasma membrane-bound complex I is composed of TNFRSF1A, TRADD, RIPK1, TRAF2 and BIRC2/c-IAP1 or BIRC3 which interacts with CHUCK/IKK-alpha, IKBKB/IKK-beta and IKBKG/IKK-gamma promoting cell survival. Subsequently, TRADD, RIPK1 and TRAF2 dissociate from TNFRSF1A and form cytoplasmic complex II with FADD and caspase CASP8 promoting cell apoptosis. Interacts with TRADD. Identified in a complex with TNFRSF1A, RIPK1 and IKBKB/IKK-beta. Interacts with RIPK2. Interacts with BIRC2 and BIRC3 N-terminus; a single BIRC2 or BIRC3 molecule interacts with a heterotrimer formed by TRAF1 and TRAF2, or a TRAF2 homotrimer. Identified in a complex composed of TRAF2, TRAF3, BIRC2 and BIRC3. Interacts with BIRC2; the interaction promotes BIRC2 stability. Interaction with BIRC2 and/or BIRC3 is essential for ubiquitination of IKBKE, degradation of NFKBIA and activation of NF-kappa-B. Within complex I, phosphorylated TRAF2 interacts (via 'Lys-63'-linked polyubiquitin chains) with CHUCK/IKK-alpha, IKBKB/IKK-beta, IKBKG/IKK-gamma TAB2, TAB3 and TAK1 in response to TNF-alpha stimulation. Within complex I, interacts with UXT isoform 1 (via TPQE motif); the interaction prevents the recruitment of FADD and CASP8/caspase 8 to complex I. Forms a complex composed of TNFRSF8/CD30 or TNFRSF1B/TNFR2, and TRAF1, TRAF2 and E3 ligase TRAIP. Within the complex, interacts with TRAIP; the interaction inhibits TRAF2-mediated NF-kappa B activation. Component of a complex composed of TANK and TBK1. Interacts with TRPC4AP. Interacts with MAP3K1/MEKK1, MAP3K5/ASK1 and MAP3K11/MLK3 in response to TNF-alpha stimulation; the interaction leads to JNK activation and interaction with MAP3K5 is inhibited by PRMT1. Component of a complex composed of MAP3K14/NIK BIRC3 and TRAF3; the interaction leads to BIRC2/3-mediated ubiquitination of TRAF3 upon CD40 engagement in a TRAF2-dependent manner. Interacts with MAP3K14/NIK in response to TNF-alpha stimulation; the interaction leads to NF-kappa B activation. Interacts with PEG3; the interaction may promote TRAF2-mediated NF-kappa B activation. Interacts with HIVEP3; the interaction may inhibit TNF-alpha-TRAF2-mediated NF-kappa B and JNK activation. Interacts with TANK/ITRAF; the interaction prevents interaction between TNFRSF1B/TNFR2 and TRAF2. Interacts with deubiquitinating enzyme CYLD; the interaction results in the deubiquitination and inactivation of TRAF2. Interacts with SIAH2; the interaction leads to TRAF2 ubiquitination and degradation. Interacts with E2 conjugating enzyme UBE2N/Ubc13, E3 ligase ITCH and RNF11 in response to TNF-alpha stimulation. Interacts with ubiquitin-editing enzyme TNFAIP3/A20 in response to TNF-alpha stimulation; the interaction promotes TRAF2 dissociation from UBE2N/Ubc13, ITCH, RNF11 and TAX1BP1 and prevents prolonged TRAF-2 ubiquitination. Interacts with TAX1BP1 in response to TNF-alpha stimulation; the interaction promotes TRAF2 dissociation from UBE2N/Ubc13 and TNFAIP3/A20, and prevents prolonged TRAF-2 ubiquitination. Interacts (via C-terminus) with EIF2AK2/PKR (via the kinase catalytic domain). Interacts with deubiquitinating enzyme USP48. Interacts with PTPN2; probably involved in TNF-mediated signaling. Interacts with Toll-like receptor TLR4/3 adapter TICAM1/TRIF; the interaction may promote TICAM1 ubiquitination. Interacts with kinase/endoribonuclease ERN1/IRE1 and DAB2IP in response to ER stress; the interaction requires DAB2IP. Interacts with ERN1/IRE1 and TAOK3 in response to ER stress; the interaction may promote TRAF2 phosphorylation. Interacts (via zinc fingers) with DAB2IP (via C-terminus PER domain) in response to TNF-alpha stimulation. Interacts with CASP8AP2/FLASH. Interacts with NFATC2IP; the interaction may repress IL-4 production in T cells. Interacts with kinase CDK9. Interacts with sphingosine kinase 1 SPHK1. Interacts with kinase TNIK. Interacts with TRAFD1. Interacts with DNA phosphodiesterase TDP2. Interacts with MAVS/IPS1. Interacts with CARD14. Interacts with GPS2. Interacts with XPNPEP3. Interacts with RIPK3. Interacts with RELL2. Interacts with LRRC19. Interacts with GAPDH; promoting TRAF2 ubiquitination. Post-translationally, phosphorylated at several serine residues within the first 128 amino acid residues. Phosphorylated at Thr-117 in response to signaling via TNF and TNFRSF1A. Phosphorylation at Thr-117 is required for 'Lys-63'-linked polyubiquitination, but not for 'Lys-48'-linked polyubiquitination. Phosphorylation at Thr-117 is important for interaction with IKKA and IKKB, activation of IKK and subsequent activation of NF-kappa-B. In terms of processing, undergoes both 'Lys-48'-linked and 'Lys-63'-linked polyubiquitination. Polyubiquitinated via 'Lys-63'-linked ubiquitin in response to TNF signaling; this requires prior phosphorylation at Thr-117. 'Lys-63'-linked polyubiquitination promotes TRAF2-mediated activation of NF-kappa-B. Can be polyubiquitinated at several Lys residues via 'Lys-48'-linked ubiquitin chains in response to TNF signaling, leading to proteasomal degradation. Autoubiquitinated, leading to its subsequent proteasomal degradation. Polyubiquitinated by BIRC2 and SIAH2, leading to its subsequent proteasomal degradation. Not ubiquitinated by BIRC3 or SIAH1. Deubiquitinated by CYLD, a protease that specifically cleaves 'Lys-63'-linked polyubiquitin chains. Ubiquination is inhibited by LRRC19; inhiits proteasomal degradation. Ubiquitinated at Lys-320 by the SCF(FBXL2) complex, leading to its degradation by the proteasome. Ubiquitinated by E3 ubiquitin-protein ligase complex containing FBXO7; leading to repression of NF-kappa-B signaling. In terms of tissue distribution, isoform 1 and isoform 2 are expressed in spleen, adipose tissues, skeletal muscles, thymus, testis, heart, lung, brain. Isoform 2 is very weakly expressed in heart, lung and brain.

The protein resides in the cytoplasm. It catalyses the reaction S-ubiquitinyl-[E2 ubiquitin-conjugating enzyme]-L-cysteine + [acceptor protein]-L-lysine = [E2 ubiquitin-conjugating enzyme]-L-cysteine + N(6)-ubiquitinyl-[acceptor protein]-L-lysine.. Its pathway is protein modification; protein ubiquitination. Has very low E3 ubiquitin ligase activity in the absence of sphingosine-1-phosphate. E3 ubiquitin ligase activity is strongly activated by cytoplasmic sphingosine-1-phosphate. In terms of biological role, E3 ubiquitin-protein ligase that regulates activation of NF-kappa-B and JNK and plays a central role in the regulation of cell survival and apoptosis. Catalyzes 'Lys-63'-linked ubiquitination of target proteins, such as BIRC3, IKBKE, MLST8, RIPK1 and TICAM1. Is an essential constituent of several E3 ubiquitin-protein ligase complexes, where it promotes the ubiquitination of target proteins by bringing them into contact with other E3 ubiquitin ligases. Regulates BIRC2 and BIRC3 protein levels by inhibiting their autoubiquitination and subsequent degradation; this does not depend on the TRAF2 RING-type zinc finger domain. Plays a role in mediating activation of NF-kappa-B by EIF2AK2/PKR. In complex with BIRC2 or BIRC3, promotes ubiquitination of IKBKE. Acts as a regulator of mTORC1 and mTORC2 assembly by mediating 'Lys-63'-linked ubiquitination of MLST8, thereby inhibiting formation of the mTORC2 complex, while facilitating assembly of the mTORC1 complex. Required for normal antibody isotype switching from IgM to IgG. This is TNF receptor-associated factor 2 (Traf2) from Mus musculus (Mouse).